Here is a 339-residue protein sequence, read N- to C-terminus: Large ribosomal subunit protein uL10 (339 aa).

Positions 307–339 (VEEEKKEEKVEEEKEDEEASEEEALAGLSALFG) are disordered. The span at 308–318 (EEEKKEEKVEE) shows a compositional bias: basic and acidic residues. Residues 319–330 (EKEDEEASEEEA) are compositionally biased toward acidic residues.

Belongs to the universal ribosomal protein uL10 family. In terms of assembly, part of the 50S ribosomal subunit. Forms part of the ribosomal stalk which helps the ribosome interact with GTP-bound translation factors. Forms a heptameric L10(L12)2(L12)2(L12)2 complex, where L10 forms an elongated spine to which the L12 dimers bind in a sequential fashion.

Forms part of the ribosomal stalk, playing a central role in the interaction of the ribosome with GTP-bound translation factors. The polypeptide is Large ribosomal subunit protein uL10 (Pyrococcus furiosus (strain ATCC 43587 / DSM 3638 / JCM 8422 / Vc1)).